The following is a 335-amino-acid chain: Anthranilate phosphoribosyltransferase (335 aa).

5-phospho-alpha-D-ribose 1-diphosphate contacts are provided by residues glycine 79, 82-83, threonine 87, 89-92, 107-115, and serine 119; these read GD, NVST, and KHCNKGVSS. Anthranilate is bound at residue glycine 79. Serine 91 contributes to the Mg(2+) binding site. Anthranilate is bound at residue asparagine 110. Position 165 (arginine 165) interacts with anthranilate. Positions 223 and 224 each coordinate Mg(2+).

It belongs to the anthranilate phosphoribosyltransferase family. Homodimer. Requires Mg(2+) as cofactor.

It carries out the reaction N-(5-phospho-beta-D-ribosyl)anthranilate + diphosphate = 5-phospho-alpha-D-ribose 1-diphosphate + anthranilate. Its pathway is amino-acid biosynthesis; L-tryptophan biosynthesis; L-tryptophan from chorismate: step 2/5. Catalyzes the transfer of the phosphoribosyl group of 5-phosphorylribose-1-pyrophosphate (PRPP) to anthranilate to yield N-(5'-phosphoribosyl)-anthranilate (PRA). The chain is Anthranilate phosphoribosyltransferase from Buchnera aphidicola subsp. Schizaphis graminum (strain Sg).